The following is a 506-amino-acid chain: UDP-N-acetylglucosamine--peptide N-acetylglucosaminyltransferase GtfA subunit (506 aa).

Residue 16–19 coordinates UDP; that stretch reads GVEY. An N-acetyl-D-glucosamine-binding site is contributed by histidine 241. 384–385 is a binding site for UDP; that stretch reads HK. 404-407 is an N-acetyl-D-glucosamine binding site; sequence EGFG.

It belongs to the glycosyltransferase group 1 family. Glycosyltransferase 4 subfamily. As to quaternary structure, interacts with stabilizing protein GtfB (Gtf2), probably as a heterotetramer with 2 subunits each of GtfA and GtfB, part of the accessory SecA2/SecY2 protein translocation apparatus.

The protein resides in the cytoplasm. It is found in the cell membrane. The catalysed reaction is L-seryl-[protein] + UDP-N-acetyl-alpha-D-glucosamine = 3-O-[N-acetyl-alpha-D-glucosaminyl]-L-seryl-[protein] + UDP + H(+). It participates in protein modification; protein glycosylation. In terms of biological role, required for polymorphic O-glycosylation of the serine-rich repeat protein Srr2. Catalyzes the first step in glycosylation by transferring N-acetylglucosamine from UDP-GlcNAc to serine residues of Srr2. Part of the accessory SecA2/SecY2 system specifically required to export serine-rich repeat proteins, probably Srr2 in this organism. The GtfA-GtfB (Gtf1-Gtf2 in this bacteria) complex adds GlcNAc from UDP-GlcNAc to Srr2 substrate. This subunit has low glycosyltransferase activity; GtfB enhances glycosyltransferase activity in vitro. Upon expression in S.parasanguis GtfA/GtfB restores expression of serine-rich repeat protein Fap1 and complements a biofilm formation defect. This Streptococcus agalactiae protein is UDP-N-acetylglucosamine--peptide N-acetylglucosaminyltransferase GtfA subunit.